Here is a 207-residue protein sequence, read N- to C-terminus: Ubiquitin-conjugating enzyme E2 E3 (207 aa).

Residues M1–D10 are compositionally biased toward basic and acidic residues. Residues M1–A63 form a disordered region. At S2 the chain carries N-acetylserine. S8 is subject to Phosphoserine. Positions K50 to A63 are enriched in low complexity. Positions T61–T207 constitute a UBC core domain. The Glycyl thioester intermediate role is filled by C145.

This sequence belongs to the ubiquitin-conjugating enzyme family. In terms of assembly, the ubiquitin-loaded form interacts specifically with importin-11 (IPO11), leading to its import into the nucleus. Interacts with NEDD4L.

It localises to the nucleus. Its subcellular location is the cytoplasm. The enzyme catalyses S-ubiquitinyl-[E1 ubiquitin-activating enzyme]-L-cysteine + [E2 ubiquitin-conjugating enzyme]-L-cysteine = [E1 ubiquitin-activating enzyme]-L-cysteine + S-ubiquitinyl-[E2 ubiquitin-conjugating enzyme]-L-cysteine.. It functions in the pathway protein modification; protein ubiquitination. Functionally, accepts ubiquitin from the E1 complex and catalyzes its covalent attachment to other proteins. In vitro catalyzes 'Lys-11'- and 'Lys-48'-, as well as 'Lys-63'-linked polyubiquitination. Participates in the regulation of transepithelial sodium transport in renal cells. The sequence is that of Ubiquitin-conjugating enzyme E2 E3 (UBE2E3) from Bos taurus (Bovine).